Reading from the N-terminus, the 557-residue chain is Dihydroxy-acid dehydratase (557 aa).

Residue aspartate 78 participates in Mg(2+) binding. A [2Fe-2S] cluster-binding site is contributed by cysteine 119. The Mg(2+) site is built by aspartate 120 and lysine 121. N6-carboxylysine is present on lysine 121. Cysteine 192 contacts [2Fe-2S] cluster. A Mg(2+)-binding site is contributed by glutamate 442. Residue serine 468 is the Proton acceptor of the active site.

Belongs to the IlvD/Edd family. In terms of assembly, homodimer. Requires [2Fe-2S] cluster as cofactor. The cofactor is Mg(2+).

It catalyses the reaction (2R)-2,3-dihydroxy-3-methylbutanoate = 3-methyl-2-oxobutanoate + H2O. It carries out the reaction (2R,3R)-2,3-dihydroxy-3-methylpentanoate = (S)-3-methyl-2-oxopentanoate + H2O. The protein operates within amino-acid biosynthesis; L-isoleucine biosynthesis; L-isoleucine from 2-oxobutanoate: step 3/4. It participates in amino-acid biosynthesis; L-valine biosynthesis; L-valine from pyruvate: step 3/4. Functionally, functions in the biosynthesis of branched-chain amino acids. Catalyzes the dehydration of (2R,3R)-2,3-dihydroxy-3-methylpentanoate (2,3-dihydroxy-3-methylvalerate) into 2-oxo-3-methylpentanoate (2-oxo-3-methylvalerate) and of (2R)-2,3-dihydroxy-3-methylbutanoate (2,3-dihydroxyisovalerate) into 2-oxo-3-methylbutanoate (2-oxoisovalerate), the penultimate precursor to L-isoleucine and L-valine, respectively. The chain is Dihydroxy-acid dehydratase from Bacillus thuringiensis subsp. konkukian (strain 97-27).